We begin with the raw amino-acid sequence, 134 residues long: Small ribosomal subunit protein uS9 (134 aa).

Residues 109–134 form a disordered region; sequence DARRTEPHKPSKSTKGPRAKRQKSYR. The segment covering 118 to 134 has biased composition (basic residues); sequence PSKSTKGPRAKRQKSYR.

The protein belongs to the universal ribosomal protein uS9 family.

The sequence is that of Small ribosomal subunit protein uS9 from Methanococcus aeolicus (strain ATCC BAA-1280 / DSM 17508 / OCM 812 / Nankai-3).